Reading from the N-terminus, the 408-residue chain is Aminomethyltransferase, mitochondrial (408 aa).

The transit peptide at 1–30 directs the protein to the mitochondrion; it reads MRGGLWQLGQSITRRLANGGDKKAVARRCF. 3 residues coordinate substrate: glutamate 235, arginine 266, and tyrosine 404.

This sequence belongs to the GcvT family. The glycine cleavage system is composed of four proteins: P, T, L and H.

It localises to the mitochondrion. It catalyses the reaction N(6)-[(R)-S(8)-aminomethyldihydrolipoyl]-L-lysyl-[protein] + (6S)-5,6,7,8-tetrahydrofolate = N(6)-[(R)-dihydrolipoyl]-L-lysyl-[protein] + (6R)-5,10-methylene-5,6,7,8-tetrahydrofolate + NH4(+). The glycine cleavage system catalyzes the degradation of glycine. This Pisum sativum (Garden pea) protein is Aminomethyltransferase, mitochondrial (GDCST).